A 128-amino-acid polypeptide reads, in one-letter code: Large ribosomal subunit protein bL17 (128 aa).

The protein belongs to the bacterial ribosomal protein bL17 family. In terms of assembly, part of the 50S ribosomal subunit. Contacts protein L32.

In Streptococcus agalactiae serotype Ia (strain ATCC 27591 / A909 / CDC SS700), this protein is Large ribosomal subunit protein bL17.